The following is a 274-amino-acid chain: Putative hydro-lyase Veis_4744 (274 aa).

It belongs to the D-glutamate cyclase family.

This chain is Putative hydro-lyase Veis_4744, found in Verminephrobacter eiseniae (strain EF01-2).